A 373-amino-acid polypeptide reads, in one-letter code: Probable tRNA sulfurtransferase (373 aa).

Residues 54–158 enclose the THUMP domain; the sequence is NKNIEELSKV…NDVAYFYHKI (105 aa). ATP is bound by residues 176-177, 201-202, Lys-256, Gly-278, and Gln-287; these read LF and NF.

The protein belongs to the ThiI family.

It is found in the cytoplasm. It carries out the reaction [ThiI sulfur-carrier protein]-S-sulfanyl-L-cysteine + a uridine in tRNA + 2 reduced [2Fe-2S]-[ferredoxin] + ATP + H(+) = [ThiI sulfur-carrier protein]-L-cysteine + a 4-thiouridine in tRNA + 2 oxidized [2Fe-2S]-[ferredoxin] + AMP + diphosphate. The catalysed reaction is [ThiS sulfur-carrier protein]-C-terminal Gly-Gly-AMP + S-sulfanyl-L-cysteinyl-[cysteine desulfurase] + AH2 = [ThiS sulfur-carrier protein]-C-terminal-Gly-aminoethanethioate + L-cysteinyl-[cysteine desulfurase] + A + AMP + 2 H(+). It functions in the pathway cofactor biosynthesis; thiamine diphosphate biosynthesis. Catalyzes the ATP-dependent transfer of a sulfur to tRNA to produce 4-thiouridine in position 8 of tRNAs, which functions as a near-UV photosensor. Also catalyzes the transfer of sulfur to the sulfur carrier protein ThiS, forming ThiS-thiocarboxylate. This is a step in the synthesis of thiazole, in the thiamine biosynthesis pathway. The sulfur is donated as persulfide by IscS. This is Probable tRNA sulfurtransferase from Saccharolobus islandicus (strain M.14.25 / Kamchatka #1) (Sulfolobus islandicus).